Here is a 358-residue protein sequence, read N- to C-terminus: Chorismate synthase (358 aa).

Arg47 contacts NADP(+). FMN is bound by residues 124 to 126, 240 to 241, Gly284, 299 to 303, and Arg325; these read RSS, NA, and KPIAT.

The protein belongs to the chorismate synthase family. As to quaternary structure, homotetramer. It depends on FMNH2 as a cofactor.

The catalysed reaction is 5-O-(1-carboxyvinyl)-3-phosphoshikimate = chorismate + phosphate. The protein operates within metabolic intermediate biosynthesis; chorismate biosynthesis; chorismate from D-erythrose 4-phosphate and phosphoenolpyruvate: step 7/7. Its function is as follows. Catalyzes the anti-1,4-elimination of the C-3 phosphate and the C-6 proR hydrogen from 5-enolpyruvylshikimate-3-phosphate (EPSP) to yield chorismate, which is the branch point compound that serves as the starting substrate for the three terminal pathways of aromatic amino acid biosynthesis. This reaction introduces a second double bond into the aromatic ring system. This is Chorismate synthase from Bacteroides thetaiotaomicron (strain ATCC 29148 / DSM 2079 / JCM 5827 / CCUG 10774 / NCTC 10582 / VPI-5482 / E50).